Here is a 213-residue protein sequence, read N- to C-terminus: tRNA (guanine-N(7)-)-methyltransferase (213 aa).

The S-adenosyl-L-methionine site is built by glutamate 43, aspartate 68, asparagine 95, and asparagine 117. Residues aspartate 153 and 190–193 (TEYE) each bind substrate.

Belongs to the class I-like SAM-binding methyltransferase superfamily. TrmB family.

It carries out the reaction guanosine(46) in tRNA + S-adenosyl-L-methionine = N(7)-methylguanosine(46) in tRNA + S-adenosyl-L-homocysteine. The protein operates within tRNA modification; N(7)-methylguanine-tRNA biosynthesis. In terms of biological role, catalyzes the formation of N(7)-methylguanine at position 46 (m7G46) in tRNA. The protein is tRNA (guanine-N(7)-)-methyltransferase of Desulfitobacterium hafniense (strain DSM 10664 / DCB-2).